Consider the following 353-residue polypeptide: Guanine nucleotide-binding protein subunit alpha (353 aa).

The interval 1-25 is disordered; the sequence is MGCGMSTEDKEGKARNEEIENQLKR. Gly-2 carries N-myristoyl glycine lipidation. Cys-3 carries the S-palmitoyl cysteine lipid modification. Positions 7–25 are enriched in basic and acidic residues; sequence TEDKEGKARNEEIENQLKR. The region spanning 32-353 is the G-alpha domain; it reads NEIKMLLLGA…QENLRLCGLI (322 aa). Residues 35–48 are G1 motif; that stretch reads KMLLLGAGESGKST. The GTP site is built by Glu-43, Ser-44, Gly-45, Lys-46, Ser-47, Thr-48, Asp-150, Leu-175, Thr-181, Gly-203, Asn-269, Lys-270, Asp-272, and Ala-325. Ser-47 contacts Mg(2+). Residues 173–181 form a G2 motif region; sequence DVLRSRVKT. A Mg(2+)-binding site is contributed by Thr-181. The tract at residues 196 to 205 is G3 motif; sequence YRMFDVGGQR. The tract at residues 265–272 is G4 motif; it reads ILFLNKID. The tract at residues 323–328 is G5 motif; sequence TCATDT.

It belongs to the G-alpha family. G(q) subfamily. As to quaternary structure, g proteins are composed of 3 units; alpha, beta and gamma. The alpha chain contains the guanine nucleotide binding site. Mg(2+) is required as a cofactor.

Guanine nucleotide-binding proteins (G proteins) are involved as modulators or transducers in various transmembrane signaling systems. In Colletotrichum trifolii, this protein is Guanine nucleotide-binding protein subunit alpha (CTG1).